We begin with the raw amino-acid sequence, 1250 residues long: DNA topoisomerase 3-alpha (1250 aa).

In terms of domain architecture, Toprim spans 27-171 (KYLNVAEKND…NISVYRATFS (145 aa)). Residues 189 to 610 (DKRQSDAVDV…EQIAKYKQAY (422 aa)) enclose the Topo IA-type catalytic domain. Tyr356 acts as the O-(5'-phospho-DNA)-tyrosine intermediate in catalysis. Gly residues predominate over residues 769–835 (RGGGGGPGPG…GTGGGGLGGG (67 aa)). Disordered regions lie at residues 769 to 899 (RGGG…GLDE) and 953 to 1035 (NGGT…TVLC). Over residues 840–865 (PGGESKKSATKKPPNEPKPKKTKEPK) the composition is skewed to basic and acidic residues. Low complexity predominate over residues 866–886 (AAPNKKTSSKSSGSIRSFFTS). Over residues 956–965 (TMPTESNGDQ) the composition is skewed to polar residues. 2 stretches are compositionally biased toward basic and acidic residues: residues 966–994 (QLDK…RERA) and 1012–1021 (PRWDSVERDS). Over residues 1022 to 1033 (TPPSSVPESETV) the composition is skewed to low complexity. Residues Cys1035, Cys1038, Cys1061, and Cys1067 each contribute to the Zn(2+) site. Residues 1035 to 1076 (CTGCQQPARQNTVRKNGPNLGRLYYKCPKPDECNFFQWADEP) form a GRF-type 1 zinc finger. Residues 1069–1150 (FFQWADEPPS…TATPGDGEEV (82 aa)) are disordered. The span at 1079–1101 (SAKSKNSTGSAPQSTTSWGSNRV) shows a compositional bias: polar residues. The span at 1106-1134 (SIQQSNSQRGQSSMRSNSSSTVTITQTKT) shows a compositional bias: low complexity. 4 residues coordinate Zn(2+): Cys1152, Cys1154, Cys1177, and Cys1184. The GRF-type 2 zinc-finger motif lies at 1152–1193 (CNCGQLASQLTVRKDGPNQGRPFYACPTREKSCGFFKWGDED). The segment at 1188–1231 (KWGDEDQNQGASSTSWGSANRNPPGRSQPTAITSDGPKTRRCGL) is disordered. Polar residues predominate over residues 1195 to 1220 (NQGASSTSWGSANRNPPGRSQPTAIT).

It belongs to the type IA topoisomerase family.

The enzyme catalyses ATP-independent breakage of single-stranded DNA, followed by passage and rejoining.. Releases the supercoiling and torsional tension of DNA introduced during the DNA replication and transcription by transiently cleaving and rejoining one strand of the DNA duplex. Introduces a single-strand break via transesterification at a target site in duplex DNA. The scissile phosphodiester is attacked by the catalytic tyrosine of the enzyme, resulting in the formation of a DNA-(5'-phosphotyrosyl)-enzyme intermediate and the expulsion of a 3'-OH DNA strand. The free DNA strand than undergoes passage around the unbroken strand thus removing DNA supercoils. Finally, in the religation step, the DNA 3'-OH attacks the covalent intermediate to expel the active-site tyrosine and restore the DNA phosphodiester backbone. Weakly relaxes negative supercoils and displays a distinct preference for binding single-stranded DNA. The protein is DNA topoisomerase 3-alpha (Top3alpha) of Drosophila melanogaster (Fruit fly).